The following is a 143-amino-acid chain: Large ribosomal subunit protein uL15 (143 aa).

Positions 1–13 (MIRKKKKVKKIRG) are enriched in basic residues. The disordered stretch occupies residues 1 to 39 (MIRKKKKVKKIRGSRTCGGGSHKKRRGAGNKGGRGMAGG). Residues 29-38 (GNKGGRGMAG) show a composition bias toward gly residues.

This sequence belongs to the universal ribosomal protein uL15 family. Part of the 50S ribosomal subunit.

Binds to the 23S rRNA. This chain is Large ribosomal subunit protein uL15, found in Methanocaldococcus jannaschii (strain ATCC 43067 / DSM 2661 / JAL-1 / JCM 10045 / NBRC 100440) (Methanococcus jannaschii).